Consider the following 361-residue polypeptide: Queuine tRNA-ribosyltransferase (361 aa).

Asp-92 functions as the Proton acceptor in the catalytic mechanism. Residues Asp-92 to Phe-96, Asp-146, Gln-189, and Gly-216 contribute to the substrate site. The segment at Gly-247–Asp-253 is RNA binding. Asp-266 functions as the Nucleophile in the catalytic mechanism. An RNA binding; important for wobble base 34 recognition region spans residues Thr-271–Arg-275. The Zn(2+) site is built by Cys-304, Cys-306, Cys-309, and His-335.

This sequence belongs to the queuine tRNA-ribosyltransferase family. As to quaternary structure, homodimer. Within each dimer, one monomer is responsible for RNA recognition and catalysis, while the other monomer binds to the replacement base PreQ1. It depends on Zn(2+) as a cofactor.

It catalyses the reaction 7-aminomethyl-7-carbaguanine + guanosine(34) in tRNA = 7-aminomethyl-7-carbaguanosine(34) in tRNA + guanine. Its pathway is tRNA modification; tRNA-queuosine biosynthesis. In terms of biological role, catalyzes the base-exchange of a guanine (G) residue with the queuine precursor 7-aminomethyl-7-deazaguanine (PreQ1) at position 34 (anticodon wobble position) in tRNAs with GU(N) anticodons (tRNA-Asp, -Asn, -His and -Tyr). Catalysis occurs through a double-displacement mechanism. The nucleophile active site attacks the C1' of nucleotide 34 to detach the guanine base from the RNA, forming a covalent enzyme-RNA intermediate. The proton acceptor active site deprotonates the incoming PreQ1, allowing a nucleophilic attack on the C1' of the ribose to form the product. After dissociation, two additional enzymatic reactions on the tRNA convert PreQ1 to queuine (Q), resulting in the hypermodified nucleoside queuosine (7-(((4,5-cis-dihydroxy-2-cyclopenten-1-yl)amino)methyl)-7-deazaguanosine). The protein is Queuine tRNA-ribosyltransferase of Rickettsia massiliae (strain Mtu5).